The sequence spans 206 residues: Large ribosomal subunit protein uL4 (206 aa).

The segment at 44–87 (KRQGTHATKTRGMKRGGGAKPWRQKGTGRARAGSTRSPLWRGGG) is disordered.

This sequence belongs to the universal ribosomal protein uL4 family. In terms of assembly, part of the 50S ribosomal subunit.

Its function is as follows. One of the primary rRNA binding proteins, this protein initially binds near the 5'-end of the 23S rRNA. It is important during the early stages of 50S assembly. It makes multiple contacts with different domains of the 23S rRNA in the assembled 50S subunit and ribosome. In terms of biological role, forms part of the polypeptide exit tunnel. This Maridesulfovibrio salexigens (strain ATCC 14822 / DSM 2638 / NCIMB 8403 / VKM B-1763) (Desulfovibrio salexigens) protein is Large ribosomal subunit protein uL4.